A 350-amino-acid chain; its full sequence is Protein RecA (350 aa).

65-72 (GPESSGKT) contacts ATP. A disordered region spans residues 326–350 (HNLKTRNTADSKVTGAKDEKSKEEK). Over residues 340 to 350 (GAKDEKSKEEK) the composition is skewed to basic and acidic residues.

Belongs to the RecA family.

The protein resides in the cytoplasm. In terms of biological role, can catalyze the hydrolysis of ATP in the presence of single-stranded DNA, the ATP-dependent uptake of single-stranded DNA by duplex DNA, and the ATP-dependent hybridization of homologous single-stranded DNAs. It interacts with LexA causing its activation and leading to its autocatalytic cleavage. In Clostridium novyi (strain NT), this protein is Protein RecA.